The chain runs to 142 residues: Hemoglobin subunit alpha-1 (142 aa).

The Globin domain maps to 2–142 (LLSADDKKHI…VSTVLTSKYR (141 aa)). H59 provides a ligand contact to O2. Heme b is bound at residue H88.

The protein belongs to the globin family. In terms of assembly, heterotetramer of two alpha chains and two beta chains. In terms of tissue distribution, red blood cells.

Its function is as follows. Involved in oxygen transport from the lung to the various peripheral tissues. In Xenopus laevis (African clawed frog), this protein is Hemoglobin subunit alpha-1 (hba1).